The following is a 201-amino-acid chain: MAASLSELSTYLGERLIGRVNDADIAYGELTMHVEPRNLIEVVTFLRDDQRCQFISIIDVCGADYPSRPKRFDVVYHLLSPKQNVRIRLKVQADEETMVPSITGVFPGADWFERETYDLYGVLFSGHPDLRRLLTDYGFEGHPLRKDFPLTGFVEVRYDDEAKRVIYEPVELKQEFRNFDFLSPWEGTDYVLPGDEKAKTN.

The protein belongs to the complex I 30 kDa subunit family. In terms of assembly, NDH-1 is composed of 14 different subunits. Subunits NuoB, C, D, E, F, and G constitute the peripheral sector of the complex.

The protein localises to the cell inner membrane. The catalysed reaction is a quinone + NADH + 5 H(+)(in) = a quinol + NAD(+) + 4 H(+)(out). Its function is as follows. NDH-1 shuttles electrons from NADH, via FMN and iron-sulfur (Fe-S) centers, to quinones in the respiratory chain. The immediate electron acceptor for the enzyme in this species is believed to be ubiquinone. Couples the redox reaction to proton translocation (for every two electrons transferred, four hydrogen ions are translocated across the cytoplasmic membrane), and thus conserves the redox energy in a proton gradient. This chain is NADH-quinone oxidoreductase subunit C, found in Mesorhizobium japonicum (strain LMG 29417 / CECT 9101 / MAFF 303099) (Mesorhizobium loti (strain MAFF 303099)).